The primary structure comprises 1060 residues: Carbamoyl phosphate synthase large chain (1060 aa).

Positions 1–401 are carboxyphosphate synthetic domain; sequence MPKRTDIKKI…SLLKAVRSLE (401 aa). Residues Arg-129, Arg-169, Gly-175, Gly-176, Lys-208, Ile-210, Glu-215, Gly-241, Ile-242, His-243, Gln-284, and Glu-298 each coordinate ATP. An ATP-grasp 1 domain is found at 133 to 327; it reads KQLMEELEQP…IAKLAAKIAV (195 aa). Mg(2+)-binding residues include Gln-284, Glu-298, and Asn-300. Positions 284, 298, and 300 each coordinate Mn(2+). The oligomerization domain stretch occupies residues 402–546; sequence IGAYHNELAE…YSTYEVENES (145 aa). The segment at 547-929 is carbamoyl phosphate synthetic domain; that stretch reads NVSKKPSVLV…ALYKAFEASG (383 aa). The ATP-grasp 2 domain maps to 671-861; sequence EQALQELAIP…MAQVATKAIL (191 aa). ATP contacts are provided by Arg-707, Ser-746, Leu-748, Glu-752, Gly-777, Val-778, His-779, Ser-780, Gln-820, and Glu-832. Mg(2+)-binding residues include Gln-820, Glu-832, and Asn-834. Mn(2+)-binding residues include Gln-820, Glu-832, and Asn-834. Residues 930–1060 form the MGS-like domain; that stretch reads LHLPSYGAVL…ESRAFTTEAI (131 aa). The allosteric domain stretch occupies residues 930–1060; sequence LHLPSYGAVL…ESRAFTTEAI (131 aa).

It belongs to the CarB family. Composed of two chains; the small (or glutamine) chain promotes the hydrolysis of glutamine to ammonia, which is used by the large (or ammonia) chain to synthesize carbamoyl phosphate. Tetramer of heterodimers (alpha,beta)4. Mg(2+) serves as cofactor. Requires Mn(2+) as cofactor.

The catalysed reaction is hydrogencarbonate + L-glutamine + 2 ATP + H2O = carbamoyl phosphate + L-glutamate + 2 ADP + phosphate + 2 H(+). It catalyses the reaction hydrogencarbonate + NH4(+) + 2 ATP = carbamoyl phosphate + 2 ADP + phosphate + 2 H(+). The protein operates within amino-acid biosynthesis; L-arginine biosynthesis; carbamoyl phosphate from bicarbonate: step 1/1. Its pathway is pyrimidine metabolism; UMP biosynthesis via de novo pathway; (S)-dihydroorotate from bicarbonate: step 1/3. Its function is as follows. Large subunit of the glutamine-dependent carbamoyl phosphate synthetase (CPSase). CPSase catalyzes the formation of carbamoyl phosphate from the ammonia moiety of glutamine, carbonate, and phosphate donated by ATP, constituting the first step of 2 biosynthetic pathways, one leading to arginine and/or urea and the other to pyrimidine nucleotides. The large subunit (synthetase) binds the substrates ammonia (free or transferred from glutamine from the small subunit), hydrogencarbonate and ATP and carries out an ATP-coupled ligase reaction, activating hydrogencarbonate by forming carboxy phosphate which reacts with ammonia to form carbamoyl phosphate. In Enterococcus faecalis (strain ATCC 700802 / V583), this protein is Carbamoyl phosphate synthase large chain.